The primary structure comprises 310 residues: Translocator protein BipD (310 aa).

Coiled coils occupy residues 127 to 171 (DPIL…LQDY) and 250 to 299 (DTAR…AIST).

It belongs to the invasin protein D family.

It is found in the secreted. Its function is as follows. Required for invasion of epithelial cells, as well as for survival within host cells, escape from endocytic vesicles and subsequent actin-tail formation. Probably regulates the secretion of effectors BipB and BipC and their final integration into the target cell membrane. The chain is Translocator protein BipD (bipD) from Burkholderia mallei (strain NCTC 10247).